The chain runs to 488 residues: Lysine--tRNA ligase (488 aa).

Mg(2+) contacts are provided by glutamate 398 and glutamate 405.

This sequence belongs to the class-II aminoacyl-tRNA synthetase family. In terms of assembly, homodimer. Mg(2+) is required as a cofactor.

It localises to the cytoplasm. The catalysed reaction is tRNA(Lys) + L-lysine + ATP = L-lysyl-tRNA(Lys) + AMP + diphosphate. In Carboxydothermus hydrogenoformans (strain ATCC BAA-161 / DSM 6008 / Z-2901), this protein is Lysine--tRNA ligase.